The primary structure comprises 281 residues: 4-hydroxy-3-methylbut-2-enyl diphosphate reductase (281 aa).

Cys12 provides a ligand contact to [4Fe-4S] cluster. 2 residues coordinate (2E)-4-hydroxy-3-methylbut-2-enyl diphosphate: His41 and His74. Residues His41 and His74 each coordinate dimethylallyl diphosphate. The isopentenyl diphosphate site is built by His41 and His74. A [4Fe-4S] cluster-binding site is contributed by Cys96. Residue His124 coordinates (2E)-4-hydroxy-3-methylbut-2-enyl diphosphate. His124 provides a ligand contact to dimethylallyl diphosphate. His124 serves as a coordination point for isopentenyl diphosphate. Residue Glu126 is the Proton donor of the active site. Thr164 is a (2E)-4-hydroxy-3-methylbut-2-enyl diphosphate binding site. Cys193 is a binding site for [4Fe-4S] cluster. Positions 221, 223, and 265 each coordinate (2E)-4-hydroxy-3-methylbut-2-enyl diphosphate. Positions 221, 223, and 265 each coordinate dimethylallyl diphosphate. The isopentenyl diphosphate site is built by Ser221, Asn223, and Ser265.

It belongs to the IspH family. It depends on [4Fe-4S] cluster as a cofactor.

It catalyses the reaction isopentenyl diphosphate + 2 oxidized [2Fe-2S]-[ferredoxin] + H2O = (2E)-4-hydroxy-3-methylbut-2-enyl diphosphate + 2 reduced [2Fe-2S]-[ferredoxin] + 2 H(+). The catalysed reaction is dimethylallyl diphosphate + 2 oxidized [2Fe-2S]-[ferredoxin] + H2O = (2E)-4-hydroxy-3-methylbut-2-enyl diphosphate + 2 reduced [2Fe-2S]-[ferredoxin] + 2 H(+). It functions in the pathway isoprenoid biosynthesis; dimethylallyl diphosphate biosynthesis; dimethylallyl diphosphate from (2E)-4-hydroxy-3-methylbutenyl diphosphate: step 1/1. It participates in isoprenoid biosynthesis; isopentenyl diphosphate biosynthesis via DXP pathway; isopentenyl diphosphate from 1-deoxy-D-xylulose 5-phosphate: step 6/6. Catalyzes the conversion of 1-hydroxy-2-methyl-2-(E)-butenyl 4-diphosphate (HMBPP) into a mixture of isopentenyl diphosphate (IPP) and dimethylallyl diphosphate (DMAPP). Acts in the terminal step of the DOXP/MEP pathway for isoprenoid precursor biosynthesis. In Nitratidesulfovibrio vulgaris (strain DSM 19637 / Miyazaki F) (Desulfovibrio vulgaris), this protein is 4-hydroxy-3-methylbut-2-enyl diphosphate reductase.